Here is a 74-residue protein sequence, read N- to C-terminus: UPF0346 protein LCA_0996 (74 aa).

Belongs to the UPF0346 family.

The polypeptide is UPF0346 protein LCA_0996 (Latilactobacillus sakei subsp. sakei (strain 23K) (Lactobacillus sakei subsp. sakei)).